Consider the following 239-residue polypeptide: Large ribosomal subunit protein uL1 (239 aa).

It belongs to the universal ribosomal protein uL1 family. In terms of assembly, part of the 50S ribosomal subunit.

Functionally, binds directly to 23S rRNA. The L1 stalk is quite mobile in the ribosome, and is involved in E site tRNA release. In terms of biological role, protein L1 is also a translational repressor protein, it controls the translation of the L11 operon by binding to its mRNA. This Rickettsia canadensis (strain McKiel) protein is Large ribosomal subunit protein uL1.